A 396-amino-acid polypeptide reads, in one-letter code: Phosphoglycerate kinase (396 aa).

Substrate-binding positions include 21–23 (DLN), Arg-36, 59–62 (HFGR), Arg-118, and Arg-151. ATP is bound by residues Lys-201, Glu-323, and 353-356 (GGDT).

The protein belongs to the phosphoglycerate kinase family. Monomer.

The protein localises to the cytoplasm. The enzyme catalyses (2R)-3-phosphoglycerate + ATP = (2R)-3-phospho-glyceroyl phosphate + ADP. Its pathway is carbohydrate degradation; glycolysis; pyruvate from D-glyceraldehyde 3-phosphate: step 2/5. This Brucella melitensis biotype 1 (strain ATCC 23456 / CCUG 17765 / NCTC 10094 / 16M) protein is Phosphoglycerate kinase.